We begin with the raw amino-acid sequence, 139 residues long: MLSPKKTKFRKQHRGRMKGSASKGNTIAFGDYALQATEPVWLTSRQIEATRRTITRYVRRGGKLWIRVFPDKPVTARPAETRMGSGKGAPEYWVAVIKPGHILFEITGVPQKTAQQAMKLASYKLPIKTKFIVRNTTES.

A compositionally biased stretch (basic residues) spans 1-17; that stretch reads MLSPKKTKFRKQHRGRM. A disordered region spans residues 1 to 23; sequence MLSPKKTKFRKQHRGRMKGSASK.

It belongs to the universal ribosomal protein uL16 family. In terms of assembly, part of the 50S ribosomal subunit.

Its subcellular location is the plastid. It localises to the chloroplast. In Pyropia yezoensis (Susabi-nori), this protein is Large ribosomal subunit protein uL16c.